Here is a 585-residue protein sequence, read N- to C-terminus: Poly(A) RNA polymerase, mitochondrial (585 aa).

The N-terminal 37 residues, 1–37, are a transit peptide targeting the mitochondrion; the sequence is MAARGVGLLTRLPVCSQRRNRIPRSISRLLSCPGTIA. At Lys-90 the chain carries N6-acetyllysine. ATP-binding positions include 107–109 and 244–245; these read YES and GC. Asp-246 and Asp-248 together coordinate Mg(2+). The 46-residue stretch at 441 to 486 folds into the PAP-associated domain; sequence ELLIKEFFEYFGNFAFNKNSINIRQGREQNKPDSSPLYIQNPFETS. The disordered stretch occupies residues 537–585; the sequence is PGSGHTSLSRKKKKKPMSEKVKGLLASIKSNSPDSSTDTSGKRTISTQA. Residues 564 to 585 show a composition bias toward polar residues; it reads IKSNSPDSSTDTSGKRTISTQA.

The protein belongs to the DNA polymerase type-B-like family. As to quaternary structure, homodimer. Mg(2+) serves as cofactor. It depends on Mn(2+) as a cofactor.

It is found in the cytoplasm. It localises to the mitochondrion. It catalyses the reaction RNA(n) + ATP = RNA(n)-3'-adenine ribonucleotide + diphosphate. In terms of biological role, polymerase that creates the 3' poly(A) tail of mitochondrial transcripts. Can use all four nucleotides, but has higher activity with ATP and UTP (in vitro). Plays a role in replication-dependent histone mRNA degradation. May be involved in the terminal uridylation of mature histone mRNAs before their degradation is initiated. Might be responsible for the creation of some UAA stop codons which are not encoded in mtDNA. This Mus musculus (Mouse) protein is Poly(A) RNA polymerase, mitochondrial (Mtpap).